Reading from the N-terminus, the 326-residue chain is Beta-ketoacyl-[acyl-carrier-protein] synthase III 2 (326 aa).

Catalysis depends on residues Cys-114 and His-251. An ACP-binding region spans residues Ser-252–Arg-256. Asn-281 is an active-site residue.

This sequence belongs to the thiolase-like superfamily. FabH family. As to quaternary structure, homodimer.

It is found in the cytoplasm. It carries out the reaction malonyl-[ACP] + acetyl-CoA + H(+) = 3-oxobutanoyl-[ACP] + CO2 + CoA. It functions in the pathway lipid metabolism; fatty acid biosynthesis. Its function is as follows. Catalyzes the condensation reaction of fatty acid synthesis by the addition to an acyl acceptor of two carbons from malonyl-ACP. Catalyzes the first condensation reaction which initiates fatty acid synthesis and may therefore play a role in governing the total rate of fatty acid production. Possesses both acetoacetyl-ACP synthase and acetyl transacylase activities. Its substrate specificity determines the biosynthesis of branched-chain and/or straight-chain of fatty acids. The protein is Beta-ketoacyl-[acyl-carrier-protein] synthase III 2 of Staphylococcus epidermidis (strain ATCC 12228 / FDA PCI 1200).